The following is a 356-amino-acid chain: Glucose 1-dehydrogenase (356 aa).

The tract at residues 1 to 26 (MDAIVVSKADRTPRLVDRPRPDPTPG) is disordered. The span at 8–21 (KADRTPRLVDRPRP) shows a compositional bias: basic and acidic residues. A Zn(2+)-binding site is contributed by aspartate 38. Threonine 40 contacts substrate. Residues histidine 63 and glutamate 64 each contribute to the Zn(2+) site. The disordered stretch occupies residues 86 to 107 (TVRRPRGDPTPQFDRGQPDMAA). 2 residues coordinate substrate: glutamate 113 and glutamate 149. Glutamate 149 contributes to the Zn(2+) binding site. Residues 180 to 183 (NGSL), 205 to 206 (RR), 270 to 272 (LGV), and 300 to 302 (SVN) each bind NADP(+). A substrate-binding site is contributed by asparagine 302.

Belongs to the zinc-containing alcohol dehydrogenase family. Glucose 1-dehydrogenase subfamily. Zn(2+) serves as cofactor.

The enzyme catalyses D-glucose + NAD(+) = D-glucono-1,5-lactone + NADH + H(+). The catalysed reaction is D-glucose + NADP(+) = D-glucono-1,5-lactone + NADPH + H(+). Functionally, catalyzes the NAD(P)(+)-dependent oxidation of D-glucose to D-gluconate via gluconolactone. Can utilize both NAD(+) and NADP(+) as electron acceptor. Is involved in the degradation of glucose through a modified Entner-Doudoroff pathway. The polypeptide is Glucose 1-dehydrogenase (Halobacterium salinarum (strain ATCC 700922 / JCM 11081 / NRC-1) (Halobacterium halobium)).